A 150-amino-acid polypeptide reads, in one-letter code: Catabolic 3-dehydroquinase 2 (150 aa).

Tyr-23 (proton acceptor) is an active-site residue. Substrate is bound by residues Asn-74, His-80, and Asp-87. His-100 acts as the Proton donor in catalysis. Residues 101 to 102 (IT) and Arg-111 contribute to the substrate site.

It belongs to the type-II 3-dehydroquinase family. Homododecamer. Adopts a ring-like structure, composed of an arrangement of two hexameric rings stacked on top of one another.

It catalyses the reaction 3-dehydroquinate = 3-dehydroshikimate + H2O. It functions in the pathway aromatic compound metabolism; 3,4-dihydroxybenzoate biosynthesis; 3,4-dihydroxybenzoate from 3-dehydroquinate: step 1/2. In terms of biological role, is involved in the catabolism of quinate. Allows the utilization of quinate as carbon source via the beta-ketoadipate pathway. This Neosartorya fischeri (strain ATCC 1020 / DSM 3700 / CBS 544.65 / FGSC A1164 / JCM 1740 / NRRL 181 / WB 181) (Aspergillus fischerianus) protein is Catabolic 3-dehydroquinase 2.